Here is a 399-residue protein sequence, read N- to C-terminus: Homocysteine-responsive endoplasmic reticulum-resident ubiquitin-like domain member 2 protein (399 aa).

One can recognise a Ubiquitin-like domain in the interval 10-89; sequence VTLVIKAPNQ…HMVHLVCASR (80 aa). Disordered stretches follow at residues 88-144 and 211-250; these read SRTP…SIRH and ASNQ…APEM. Polar residues predominate over residues 95 to 106; sequence PKASTSNKSMGT. Residues 107-124 show a composition bias toward low complexity; that stretch reads ASISRSSSEHSGSASPAS. Over residues 211–221 the composition is skewed to polar residues; it reads ASNQSPSNGEN. Residues 234–246 are compositionally biased toward pro residues; it reads SPPPNPPRAPPNV. A helical transmembrane segment spans residues 299–319; it reads FVMVMGAMILVYMHQAGWFPL.

The protein resides in the membrane. Functionally, could be involved in the unfolded protein response (UPR) pathway. This chain is Homocysteine-responsive endoplasmic reticulum-resident ubiquitin-like domain member 2 protein (herpud2), found in Xenopus tropicalis (Western clawed frog).